The chain runs to 344 residues: Exopolyphosphatase 1 (344 aa).

Residues 319-344 (VHTSVRAVGGQPADRNAANRSRGSKP) are disordered.

The protein belongs to the GppA/Ppx family. As to quaternary structure, homodimer.

It carries out the reaction [phosphate](n) + H2O = [phosphate](n-1) + phosphate + H(+). Degradation of inorganic polyphosphates (polyP). Releases orthophosphate processively from the ends of the polyP chain. In Mycobacterium bovis (strain ATCC BAA-935 / AF2122/97), this protein is Exopolyphosphatase 1.